The sequence spans 288 residues: Elongation factor Ts (288 aa).

An involved in Mg(2+) ion dislocation from EF-Tu region spans residues 80-83; sequence TDFL.

Belongs to the EF-Ts family.

The protein localises to the cytoplasm. Associates with the EF-Tu.GDP complex and induces the exchange of GDP to GTP. It remains bound to the aminoacyl-tRNA.EF-Tu.GTP complex up to the GTP hydrolysis stage on the ribosome. The polypeptide is Elongation factor Ts (Pseudomonas fluorescens (strain ATCC BAA-477 / NRRL B-23932 / Pf-5)).